The primary structure comprises 347 residues: Selenide, water dikinase (347 aa).

Cysteine 17 is a catalytic residue. ATP contacts are provided by residues lysine 20 and threonine 48–aspartate 50. Aspartate 51 serves as a coordination point for Mg(2+). ATP is bound by residues aspartate 68, aspartate 91, and glycine 139–serine 141. Aspartate 91 is a Mg(2+) binding site. Residue aspartate 227 participates in Mg(2+) binding.

The protein belongs to the selenophosphate synthase 1 family. Class I subfamily. In terms of assembly, homodimer. Mg(2+) is required as a cofactor.

The catalysed reaction is hydrogenselenide + ATP + H2O = selenophosphate + AMP + phosphate + 2 H(+). In terms of biological role, synthesizes selenophosphate from selenide and ATP. This is Selenide, water dikinase from Cronobacter sakazakii (strain ATCC BAA-894) (Enterobacter sakazakii).